Reading from the N-terminus, the 267-residue chain is Phosphate import ATP-binding protein PstB 2 (267 aa).

The 242-residue stretch at 21–262 folds into the ABC transporter domain; it reads LTTKDLHVYY…AKCQSTSDYV (242 aa). 53-60 is an ATP binding site; it reads GPSGCGKS.

The protein belongs to the ABC transporter superfamily. Phosphate importer (TC 3.A.1.7) family. In terms of assembly, the complex is composed of two ATP-binding proteins (PstB), two transmembrane proteins (PstC and PstA) and a solute-binding protein (PstS).

The protein resides in the cell membrane. The enzyme catalyses phosphate(out) + ATP + H2O = ADP + 2 phosphate(in) + H(+). In terms of biological role, part of the ABC transporter complex PstSACB involved in phosphate import. Responsible for energy coupling to the transport system. The polypeptide is Phosphate import ATP-binding protein PstB 2 (Streptococcus agalactiae serotype Ia (strain ATCC 27591 / A909 / CDC SS700)).